Consider the following 794-residue polypeptide: Protein sel-1 homolog 1 (794 aa).

Residues 1-21 (MQVHVGLTLLLCAVLLSSATA) form the signal peptide. The interval 20–91 (TASSDDESNQ…EEEVSVGEEI (72 aa)) is disordered. Residues 22–737 (SSDDESNQDE…DIFTQLDMDQ (716 aa)) form an interaction with ERLEC1, OS9 and SYVN1 region. Topologically, residues 22 to 738 (SSDDESNQDE…IFTQLDMDQL (717 aa)) are lumenal. Composition is skewed to acidic residues over residues 23 to 32 (SDDESNQDES) and 62 to 77 (DSED…EEEE). Ser-63 carries the post-translational modification Phosphoserine. The 49-residue stretch at 122–170 (AHGEPCHFPFLFLDKEYDECTSDGRQDGRLWCATTYDYKTDEKWGFCET) folds into the Fibronectin type-II domain. Disulfide bonds link Cys-127-Cys-153 and Cys-141-Cys-168. Sel1-like repeat units lie at residues 183–218 (AEMI…GMNH), 219–254 (TKAL…EEGS), 255–290 (PKGQ…LGGN), 291–326 (LIAH…NHVA), 373–409 (VQAQ…NAGN), 410–446 (SHAM…DMGN), 447–482 (PVGQ…EQGW), 483–518 (VDGQ…QGGH), and 519–554 (ILAF…ERGR). N-linked (GlcNAc...) asparagine glycans are attached at residues Asn-195 and Asn-217. N-linked (GlcNAc...) asparagine glycosylation occurs at Asn-272. The interval 352-537 (NSGMLEEDLI…MHASGTGVMR (186 aa)) is important for homodimerization and oligomerization. Residue Asn-431 is glycosylated (N-linked (GlcNAc...) asparagine). Asn-608 carries N-linked (GlcNAc...) asparagine glycosylation. Sel1-like repeat units follow at residues 627–662 (TVAR…EQQH) and 664–699 (AQAM…EASP). Residues 643–723 (TDVDYETAFI…VVYFLQYIRE (81 aa)) are interaction with SYVN1. Residues 738–794 (LLGPEWDLYLMTIIALLLGTVIAYRQRQHQDVPVPRPPGPWPAPPQQEGPPEQQPPQ) form a mediates retention in the endoplasmic reticulum region. A helical membrane pass occupies residues 739-759 (LGPEWDLYLMTIIALLLGTVI). At 760 to 794 (AYRQRQHQDVPVPRPPGPWPAPPQQEGPPEQQPPQ) the chain is on the cytoplasmic side. Residues 768 to 794 (DVPVPRPPGPWPAPPQQEGPPEQQPPQ) form a disordered region. The span at 771–794 (VPRPPGPWPAPPQQEGPPEQQPPQ) shows a compositional bias: pro residues.

It belongs to the sel-1 family. Homodimer and homooligomer. May form a complex with ERLEC1, HSPA5, OS9, and SYVN1. Interacts with FOXRED2 and EDEM1. Interacts with LPL and LMF1; may stabilize the complex formed by LPL and LMF1 and thereby promote the export of LPL dimers. Component of the HRD1 complex, which comprises at least SYNV1/HRD1, DERL1/2, FAM8A1, HERPUD1/HERP, OS9, SEL1L and UBE2J1. SYNV1 assembles with SEL1L and FAM8A1 through its transmembrane domains, but interaction with its cytoplasmic domain is required to confer stability to FAM8A1 and enhance recruitment of HERPUD1. The interaction with SYNV1/HRD1 is direct. N-glycosylated.

The protein resides in the endoplasmic reticulum membrane. Plays a role in the endoplasmic reticulum quality control (ERQC) system also called ER-associated degradation (ERAD) involved in ubiquitin-dependent degradation of misfolded endoplasmic reticulum proteins. Enhances SYVN1 stability. Plays a role in LPL maturation and secretion. Required for normal differentiation of the pancreas epithelium, and for normal exocrine function and survival of pancreatic cells. May play a role in Notch signaling. The polypeptide is Protein sel-1 homolog 1 (Sel1l) (Mesocricetus auratus (Golden hamster)).